Reading from the N-terminus, the 399-residue chain is Tryptophan synthase beta chain (399 aa).

Residue Lys92 is modified to N6-(pyridoxal phosphate)lysine.

Belongs to the TrpB family. Tetramer of two alpha and two beta chains. Pyridoxal 5'-phosphate serves as cofactor.

The enzyme catalyses (1S,2R)-1-C-(indol-3-yl)glycerol 3-phosphate + L-serine = D-glyceraldehyde 3-phosphate + L-tryptophan + H2O. The protein operates within amino-acid biosynthesis; L-tryptophan biosynthesis; L-tryptophan from chorismate: step 5/5. Functionally, the beta subunit is responsible for the synthesis of L-tryptophan from indole and L-serine. The protein is Tryptophan synthase beta chain of Legionella pneumophila (strain Corby).